The chain runs to 284 residues: ATP phosphoribosyltransferase (284 aa).

It belongs to the ATP phosphoribosyltransferase family. Long subfamily. Equilibrium between an active dimeric form, an inactive hexameric form and higher aggregates. Interconversion between the various forms is largely reversible and is influenced by the natural substrates and inhibitors of the enzyme. It depends on Mg(2+) as a cofactor.

The protein localises to the cytoplasm. The enzyme catalyses 1-(5-phospho-beta-D-ribosyl)-ATP + diphosphate = 5-phospho-alpha-D-ribose 1-diphosphate + ATP. It functions in the pathway amino-acid biosynthesis; L-histidine biosynthesis; L-histidine from 5-phospho-alpha-D-ribose 1-diphosphate: step 1/9. With respect to regulation, feedback inhibited by histidine. Functionally, catalyzes the condensation of ATP and 5-phosphoribose 1-diphosphate to form N'-(5'-phosphoribosyl)-ATP (PR-ATP). Has a crucial role in the pathway because the rate of histidine biosynthesis seems to be controlled primarily by regulation of HisG enzymatic activity. The protein is ATP phosphoribosyltransferase (hisG) of Mycobacterium bovis (strain ATCC BAA-935 / AF2122/97).